The sequence spans 202 residues: Ion-translocating oxidoreductase complex subunit G (202 aa).

Residues 11–31 form a helical membrane-spanning segment; that stretch reads ACLMGFFSFFSLSSVIFVKNI. The residue at position 176 (threonine 176) is an FMN phosphoryl threonine.

The protein belongs to the RnfG family. As to quaternary structure, the complex is composed of six subunits: RnfA, RnfB, RnfC, RnfD, RnfE and RnfG. FMN serves as cofactor.

The protein localises to the cell inner membrane. Its function is as follows. Part of a membrane-bound complex that couples electron transfer with translocation of ions across the membrane. The chain is Ion-translocating oxidoreductase complex subunit G from Buchnera aphidicola subsp. Schizaphis graminum (strain Sg).